The chain runs to 299 residues: Acarbose 7(IV)-phosphotransferase (299 aa).

It belongs to the carbohydrate kinase PfkB family.

The enzyme catalyses acarbose + ATP = acarbose 7(IV)-phosphate + ADP + H(+). Functionally, catalyzes the phosphorylation of the alpha-glucosidase inhibitor acarbose. Phosphorylation of acarbose could be a resistance-like self-protection mechanism. The sequence is that of Acarbose 7(IV)-phosphotransferase from Actinoplanes sp. (strain ATCC 31044 / CBS 674.73 / SE50/110).